The following is a 683-amino-acid chain: Hexamerin 70b (683 aa).

Positions 1–21 are cleaved as a signal peptide; the sequence is MIVIMKAGFLFLASLCLLVQA. Positions 32–153 constitute a Hemocyanin N-terminal domain; it reads VTRQKNIYEL…VAVIHRPDTK (122 aa). The 270-residue stretch at 159–428 folds into the Hemocyanin middle domain; that stretch reads PMYEVMPHLY…SIYKTILDYY (270 aa). N-linked (GlcNAc...) asparagine glycosylation is present at Asn203. The 237-residue stretch at 437–673 folds into the Hemocyanin C-terminal domain; sequence KYTTEELNFP…IHVKEVLVHH (237 aa).

This sequence belongs to the hemocyanin/hexamerin family. As to quaternary structure, probable homohexamer. Expressed in the fat body and secreted into the hemolymph (at protein level). Present in trophocytes and oenocytes of the fat body (at protein level).

The protein resides in the secreted. The protein localises to the nucleus. Its subcellular location is the cytoplasm. It localises to the cytoplasmic granule. In terms of biological role, storage protein that may function as a nutrient supply to compensate for lack of dietary proteins during metamorphosis and egg production. This Apis mellifera (Honeybee) protein is Hexamerin 70b.